The chain runs to 1266 residues: Kinesin-like protein KIN-12G (1266 aa).

The tract at residues Met-1 to Gln-22 is disordered. One can recognise a Kinesin motor domain in the interval Asn-32–Ile-369. Residue Gly-113–Thr-120 participates in ATP binding. 4 coiled-coil regions span residues Met-613–Val-668, Arg-817–Lys-854, Ala-1029–Val-1060, and Ser-1084–His-1120.

This sequence belongs to the TRAFAC class myosin-kinesin ATPase superfamily. Kinesin family. KIN-12 subfamily.

The polypeptide is Kinesin-like protein KIN-12G (Oryza sativa subsp. japonica (Rice)).